The following is a 343-amino-acid chain: UDP-3-O-acylglucosamine N-acyltransferase (343 aa).

The Proton acceptor role is filled by histidine 237.

This sequence belongs to the transferase hexapeptide repeat family. LpxD subfamily. Homotrimer.

The catalysed reaction is a UDP-3-O-[(3R)-3-hydroxyacyl]-alpha-D-glucosamine + a (3R)-hydroxyacyl-[ACP] = a UDP-2-N,3-O-bis[(3R)-3-hydroxyacyl]-alpha-D-glucosamine + holo-[ACP] + H(+). It participates in bacterial outer membrane biogenesis; LPS lipid A biosynthesis. Functionally, catalyzes the N-acylation of UDP-3-O-acylglucosamine using 3-hydroxyacyl-ACP as the acyl donor. Is involved in the biosynthesis of lipid A, a phosphorylated glycolipid that anchors the lipopolysaccharide to the outer membrane of the cell. This Synechococcus sp. (strain JA-3-3Ab) (Cyanobacteria bacterium Yellowstone A-Prime) protein is UDP-3-O-acylglucosamine N-acyltransferase.